A 335-amino-acid chain; its full sequence is Protein-glutamate methylesterase/protein-glutamine glutaminase 3 (335 aa).

One can recognise a Response regulatory domain in the interval 2–119 (RIGIVNDMPL…GNPQTAAAPL (118 aa)). At Asp53 the chain carries 4-aspartylphosphate. The region spanning 144–335 (PKAGGARQRL…IAPRLAEVFD (192 aa)) is the CheB-type methylesterase domain. Active-site residues include Ser159, His186, and Asp279.

Belongs to the CheB family. In terms of processing, phosphorylated by CheA. Phosphorylation of the N-terminal regulatory domain activates the methylesterase activity.

The protein resides in the cytoplasm. The enzyme catalyses [protein]-L-glutamate 5-O-methyl ester + H2O = L-glutamyl-[protein] + methanol + H(+). It catalyses the reaction L-glutaminyl-[protein] + H2O = L-glutamyl-[protein] + NH4(+). Functionally, involved in chemotaxis. Part of a chemotaxis signal transduction system that modulates chemotaxis in response to various stimuli. Catalyzes the demethylation of specific methylglutamate residues introduced into the chemoreceptors (methyl-accepting chemotaxis proteins or MCP) by CheR. Also mediates the irreversible deamidation of specific glutamine residues to glutamic acid. The chain is Protein-glutamate methylesterase/protein-glutamine glutaminase 3 from Pseudomonas aeruginosa (strain ATCC 15692 / DSM 22644 / CIP 104116 / JCM 14847 / LMG 12228 / 1C / PRS 101 / PAO1).